The chain runs to 435 residues: uncharacterized protein (435 aa).

S-adenosyl-L-methionine is bound by residues Gln-261, Tyr-294, Glu-318, and Asp-366. The active-site Nucleophile is Cys-393.

It belongs to the class I-like SAM-binding methyltransferase superfamily. RNA M5U methyltransferase family.

This is an uncharacterized protein from Bifidobacterium longum (strain NCC 2705).